The primary structure comprises 550 residues: Chaperonin GroEL (550 aa).

Residues 30-33 (TLGP), K51, 87-91 (DGTTT), G415, and D496 each bind ATP. Residues 528 to 550 (EGGDMPAMPPGGMGGMGGMGGMM) form a disordered region. Positions 538–550 (GGMGGMGGMGGMM) are enriched in gly residues.

This sequence belongs to the chaperonin (HSP60) family. Forms a cylinder of 14 subunits composed of two heptameric rings stacked back-to-back. Interacts with the co-chaperonin GroES.

The protein resides in the cytoplasm. It catalyses the reaction ATP + H2O + a folded polypeptide = ADP + phosphate + an unfolded polypeptide.. Functionally, together with its co-chaperonin GroES, plays an essential role in assisting protein folding. The GroEL-GroES system forms a nano-cage that allows encapsulation of the non-native substrate proteins and provides a physical environment optimized to promote and accelerate protein folding. The polypeptide is Chaperonin GroEL (Chlorobium phaeobacteroides (strain BS1)).